Here is a 140-residue protein sequence, read N- to C-terminus: Small ribosomal subunit protein bS16 (140 aa).

The segment at 86 to 140 (TVGKAKQAAKREEEAKQAAKEAAEAKAAAEAEAAAAAEAAKAEDAPDGETESSEG) is disordered. Residues 94-114 (AKREEEAKQAAKEAAEAKAAA) show a composition bias toward basic and acidic residues. Over residues 115–124 (EAEAAAAAEA) the composition is skewed to low complexity. The span at 130–140 (APDGETESSEG) shows a compositional bias: acidic residues.

It belongs to the bacterial ribosomal protein bS16 family.

In Parasynechococcus marenigrum (strain WH8102), this protein is Small ribosomal subunit protein bS16.